The following is a 657-amino-acid chain: UvrABC system protein B (657 aa).

Positions 25-163 (ASIKNGNKYQ…QGMVLFLEIN (139 aa)) constitute a Helicase ATP-binding domain. Residue 38 to 45 (GVTGSGKT) participates in ATP binding. The Beta-hairpin signature appears at 91–114 (YYDYYQPEAYIPRQDLFIEKDSSI). Positions 130 to 133 (LSFD) match the DEAD box motif. Residues 433–599 (QVEILYDMAK…SVSRNVEESL (167 aa)) form the Helicase C-terminal domain. Residues 622–657 (AKIVKDLRKQMMEAADKLEFEKAAALRDEIKKMRKL) enclose the UVR domain.

Belongs to the UvrB family. As to quaternary structure, forms a heterotetramer with UvrA during the search for lesions. Interacts with UvrC in an incision complex.

Its subcellular location is the cytoplasm. The UvrABC repair system catalyzes the recognition and processing of DNA lesions. A damage recognition complex composed of 2 UvrA and 2 UvrB subunits scans DNA for abnormalities. Upon binding of the UvrA(2)B(2) complex to a putative damaged site, the DNA wraps around one UvrB monomer. DNA wrap is dependent on ATP binding by UvrB and probably causes local melting of the DNA helix, facilitating insertion of UvrB beta-hairpin between the DNA strands. Then UvrB probes one DNA strand for the presence of a lesion. If a lesion is found the UvrA subunits dissociate and the UvrB-DNA preincision complex is formed. This complex is subsequently bound by UvrC and the second UvrB is released. If no lesion is found, the DNA wraps around the other UvrB subunit that will check the other stand for damage. The protein is UvrABC system protein B of Campylobacter hominis (strain ATCC BAA-381 / DSM 21671 / CCUG 45161 / LMG 19568 / NCTC 13146 / CH001A).